Reading from the N-terminus, the 337-residue chain is Structural protein VP9 (337 aa).

It is found in the virion. It localises to the host cytoplasm. The polypeptide is Structural protein VP9 (Colorado tick fever virus (strain USA/Florio N-7180) (CTFV)).